Consider the following 162-residue polypeptide: Necrosis-inducing secreted protein 1 (162 aa).

The signal sequence occupies residues 1-19 (MQFLTSLAAAASLVSLASA). N-linked (GlcNAc...) asparagine glycosylation is found at asparagine 88, asparagine 126, asparagine 133, and asparagine 150. Residues 103-132 (EYVIAASLFSLYGASSSPTVSNYNVTVNVG) are BAK1/SERK3-binding.

This sequence belongs to the NIS1 effector family. Interacts with the host pattern recognition receptor (PRR)-associated kinases BAK1/SERK3, BKK1/SERK4 and BIK1.

The protein localises to the secreted. Its subcellular location is the host cytoplasm. Its function is as follows. Secreted effector that induces necrotic lesions in Nicotiana benthamiana. Interacts with the host receptor-like kinases (RLKs) BAK1/SERK3 and BKK1/SERK4, inhibits their kinase activity and suppresses INF1-induced pathogen-associated molecular pattern (PAMP)-triggered immunity (PTI) in N.benthamiana. Also interacts with the host receptor-like cytoplasmic kinase (RLCK) BIK1 and inhibits its kinase activity, thereby inhibiting PAMP-induced ROS generation. In PTI, phosphorylation relaying by RLKs and RLCKs is critical for the initiation of downstream signaling. In Colletotrichum orbiculare (strain 104-T / ATCC 96160 / CBS 514.97 / LARS 414 / MAFF 240422) (Cucumber anthracnose fungus), this protein is Necrosis-inducing secreted protein 1.